Reading from the N-terminus, the 140-residue chain is MQHRGFFLLALLALLVVTSAVAKKKEKVKKGSECSEWTWGPCTPSSKDCGMGFREGTCGAQTQRVHCKVPCNWKKEFGADCKYKFESWGACDGSTGTKARQGTLKKARYNAQCQETIRVTKPCTSKTKSKTKAKKGKGKD.

The first 22 residues, 1 to 22 (MQHRGFFLLALLALLVVTSAVA), serve as a signal peptide directing secretion. 5 disulfide bridges follow: cysteine 34–cysteine 58, cysteine 42–cysteine 67, cysteine 49–cysteine 71, cysteine 81–cysteine 113, and cysteine 91–cysteine 123.

The protein belongs to the pleiotrophin family. As to quaternary structure, homodimer. Interacts with ALK. Interacts with LRP1; promotes neuronal survival. Interacts with LRP2. Interacts with NCAM1. Interacts (via C-terminal) with PTPRZ1 (via chondroitin sulfate chains); this interaction is inhibited by PTN; this interaction promotes neuronal migration. Interacts with NCL; this interaction promotes NCL clustering and lateral movements of this complex into lipid rafts leading to MDK internalization. Interacts with LRP6 and LRP8: this interaction is calcium dependent. Interacts with ITGA4. Interacts with ITGA6. Interacts with ITGB1. Interacts with ITGA4:ITGB1 complex; this interaction mediates MDK-induced osteoblast cells migration through PXN phosphorylation. Interacts with ITGA6:ITGB1 complex; this interaction mediates MDK-induced neurite outgrowth. Interacts with NOTCH2; this interactio mediates a nuclear accumulation of NOTCH2 and therefore activation of NOTCH2 signaling leading to interaction between HES1 and STAT3. Interacts with GPC2 (via heparan sulfate chain); this interaction is inhibited by heparin followed by chondroitin sulfate E; this interaction induces GPC2 clustering through heparan sulfate chain; this interaction induces neuronal cell adhesion and neurite outgrowth. Interacts with SDC3; this interaction induces SDC3 clustering; this interaction induces neuronal cell adhesion and neurite outgrowth. Interacts with SDC1. Interacts with CSPG5; this interaction promotes elongation of oligodendroglial precursor-like cells. Expressed in the follicular epithelium and granulosa cells of the ovary.

Its subcellular location is the secreted. Secreted protein that functions as a cytokine and growth factor and mediates its signal through cell-surface proteoglycan and non-proteoglycan receptors. Binds cell-surface proteoglycan receptors via their chondroitin sulfate (CS) groups. Thereby regulates many processes like inflammatory response, cell proliferation, cell adhesion, cell growth, cell survival, tissue regeneration, cell differentiation and cell migration. Participates in inflammatory processes by exerting two different activities. Firstly, mediates neutrophils and macrophages recruitment to the sites of inflammation both by direct action by cooperating namely with ITGB2 via LRP1 and by inducing chemokine expression. This inflammation can be accompanied by epithelial cell survival and smooth muscle cell migration after renal and vessel damage, respectively. Secondly, suppresses the development of tolerogenic dendric cells thereby inhibiting the differentiation of regulatory T cells and also promote T cell expansion through NFAT signaling and Th1 cell differentiation. Promotes tissue regeneration after injury or trauma. After heart damage negatively regulates the recruitment of inflammatory cells and mediates cell survival through activation of anti-apoptotic signaling pathways via MAPKs and AKT pathways through the activation of angiogenesis. Also facilitates liver regeneration as well as bone repair by recruiting macrophage at trauma site and by promoting cartilage development by facilitating chondrocyte differentiation. Plays a role in brain by promoting neural precursor cells survival and growth through interaction with heparan sulfate proteoglycans. Binds PTPRZ1 and promotes neuronal migration and embryonic neurons survival. Binds SDC3 or GPC2 and mediates neurite outgrowth and cell adhesion. Binds chondroitin sulfate E and heparin leading to inhibition of neuronal cell adhesion induced by binding with GPC2. Binds CSPG5 and promotes elongation of oligodendroglial precursor-like cells. Also binds ITGA6:ITGB1 complex; this interaction mediates MDK-induced neurite outgrowth. Binds LRP1; promotes neuronal survival. Binds ITGA4:ITGB1 complex; this interaction mediates MDK-induced osteoblast cells migration through PXN phosphorylation. Binds anaplastic lymphoma kinase (ALK) which induces ALK activation and subsequent phosphorylation of the insulin receptor substrate (IRS1), followed by the activation of mitogen-activated protein kinase (MAPK) and PI3-kinase, and the induction of cell proliferation. Promotes epithelial to mesenchymal transition through interaction with NOTCH2. During arteriogenesis, plays a role in vascular endothelial cell proliferation by inducing VEGFA expression and release which in turn induces nitric oxide synthase expression. Moreover activates vasodilation through nitric oxide synthase activation. Negatively regulates bone formation in response to mechanical load by inhibiting Wnt/beta-catenin signaling in osteoblasts. In addition plays a role in hippocampal development, working memory, auditory response, early fetal adrenal gland development and the female reproductive system. The chain is Midkine from Mus musculus (Mouse).